A 680-amino-acid polypeptide reads, in one-letter code: tRNA 5-methylaminomethyl-2-thiouridine biosynthesis bifunctional protein MnmC (680 aa).

The interval 1–267 (MTAEPNKPCQ…MAAILSSDAP (267 aa)) is tRNA (mnm(5)s(2)U34)-methyltransferase. The FAD-dependent cmnm(5)s(2)U34 oxidoreductase stretch occupies residues 273–680 (IGGGLASAHL…LRKLLKGKAL (408 aa)).

The protein in the N-terminal section; belongs to the methyltransferase superfamily. tRNA (mnm(5)s(2)U34)-methyltransferase family. In the C-terminal section; belongs to the DAO family. Requires FAD as cofactor.

It is found in the cytoplasm. It carries out the reaction 5-aminomethyl-2-thiouridine(34) in tRNA + S-adenosyl-L-methionine = 5-methylaminomethyl-2-thiouridine(34) in tRNA + S-adenosyl-L-homocysteine + H(+). Functionally, catalyzes the last two steps in the biosynthesis of 5-methylaminomethyl-2-thiouridine (mnm(5)s(2)U) at the wobble position (U34) in tRNA. Catalyzes the FAD-dependent demodification of cmnm(5)s(2)U34 to nm(5)s(2)U34, followed by the transfer of a methyl group from S-adenosyl-L-methionine to nm(5)s(2)U34, to form mnm(5)s(2)U34. The protein is tRNA 5-methylaminomethyl-2-thiouridine biosynthesis bifunctional protein MnmC of Shewanella putrefaciens (strain CN-32 / ATCC BAA-453).